An 801-amino-acid chain; its full sequence is N,N'-diacetylchitobiose phosphorylase (801 aa).

N-acetyl-alpha-D-glucosamine 1-phosphate contacts are provided by Arg333, Arg343, Arg349, Asp350, Trp490, and Asp492. Asp492 serves as the catalytic Proton donor. 3 residues coordinate N-acetyl-D-glucosamine: Asp492, Lys636, and Glu637. N-acetyl-alpha-D-glucosamine 1-phosphate contacts are provided by Glu637, His644, Gln690, Thr709, and Gly710.

Belongs to the glycosyl hydrolase 94 family. Homodimer.

The enzyme catalyses N,N'-diacetylchitobiose + phosphate = N-acetyl-alpha-D-glucosamine 1-phosphate + N-acetyl-D-glucosamine. In terms of biological role, catalyzes the reversible phosphorolysis of chitobiose (N,N'-diacetylchitobiose or (GlcNAc)(2)) into N-acetyl-alpha-D-glucosamine 1-phosphate (GlcNAc-1-P) and N-acetyl-D-glucosamine (GlcNAc) with inversion of the anomeric configuration. In the synthetic reaction, is also active on glucose-1-phosphate with 10% activity as compared with that on GlcNAc-1-P. GlcNAc is the best acceptor substrate, but the enzyme can use aryl-beta-glycosides of GlcNAc as the acceptor substrate with 10-20% activities of GlcNAc. Shows no phosphorolytic activity on cellobiose. In Vibrio proteolyticus (Aeromonas proteolytica), this protein is N,N'-diacetylchitobiose phosphorylase.